Reading from the N-terminus, the 101-residue chain is NADH-quinone oxidoreductase subunit K (101 aa).

Transmembrane regions (helical) follow at residues 4-24 (LSHY…GIFL), 30-50 (IILL…FVAF), and 61-81 (IFVF…LAIL).

Belongs to the complex I subunit 4L family. In terms of assembly, NDH-1 is composed of 14 different subunits. Subunits NuoA, H, J, K, L, M, N constitute the membrane sector of the complex.

The protein resides in the cell inner membrane. The enzyme catalyses a quinone + NADH + 5 H(+)(in) = a quinol + NAD(+) + 4 H(+)(out). NDH-1 shuttles electrons from NADH, via FMN and iron-sulfur (Fe-S) centers, to quinones in the respiratory chain. The immediate electron acceptor for the enzyme in this species is believed to be ubiquinone. Couples the redox reaction to proton translocation (for every two electrons transferred, four hydrogen ions are translocated across the cytoplasmic membrane), and thus conserves the redox energy in a proton gradient. The chain is NADH-quinone oxidoreductase subunit K from Nitrosomonas europaea (strain ATCC 19718 / CIP 103999 / KCTC 2705 / NBRC 14298).